Here is a 294-residue protein sequence, read N- to C-terminus: Cell division protein ZipA (294 aa).

Met1 is a topological domain (periplasmic). Residues 2 to 22 (EIGLREWLILIGIIVIAGILF) form a helical membrane-spanning segment. At 23 to 294 (DGWRRMRGGK…FERRALTQKR (272 aa)) the chain is on the cytoplasmic side. 2 disordered regions span residues 64 to 111 (THKE…GDLN) and 126 to 146 (KDDF…STPV). Basic and acidic residues predominate over residues 82–91 (ARERERDPKP).

The protein belongs to the ZipA family. Interacts with FtsZ via their C-terminal domains.

It localises to the cell inner membrane. Functionally, essential cell division protein that stabilizes the FtsZ protofilaments by cross-linking them and that serves as a cytoplasmic membrane anchor for the Z ring. Also required for the recruitment to the septal ring of downstream cell division proteins. This Pseudomonas entomophila (strain L48) protein is Cell division protein ZipA.